A 95-amino-acid polypeptide reads, in one-letter code: Mitochondrial import inner membrane translocase subunit Tim9 (95 aa).

The Twin CX3C motif signature appears at cysteine 35–cysteine 59. Disulfide bonds link cysteine 35-cysteine 59 and cysteine 39-cysteine 55.

This sequence belongs to the small Tim family. Heterohexamer; composed of 3 copies of Tim9 and 3 copies of Tim10, named soluble 70 kDa complex. The complex associates with the Tim22 component of the TIM22 complex. Interacts with multi-pass transmembrane proteins in transit.

It is found in the mitochondrion inner membrane. Its function is as follows. Mitochondrial intermembrane chaperone that participates in the import and insertion of multi-pass transmembrane proteins into the mitochondrial inner membrane. May also be required for the transfer of beta-barrel precursors from the TOM complex to the sorting and assembly machinery (SAM complex) of the outer membrane. Acts as a chaperone-like protein that protects the hydrophobic precursors from aggregation and guide them through the mitochondrial intermembrane space. The sequence is that of Mitochondrial import inner membrane translocase subunit Tim9 (Tim9a) from Drosophila melanogaster (Fruit fly).